Reading from the N-terminus, the 1008-residue chain is Collagen, type I, alpha 1a (1008 aa).

Residues serine 1–serine 21 show a composition bias toward pro residues. Residues serine 1–arginine 920 are disordered. The segment covering asparagine 39–glutamate 53 has biased composition (basic and acidic residues). Over residues threonine 92–alanine 117 the composition is skewed to low complexity. Residues proline 119 to proline 132 are compositionally biased toward pro residues. Positions glycine 133 to glycine 151 are enriched in gly residues. Low complexity-rich tracts occupy residues proline 152–proline 195 and serine 204–valine 230. Over residues glycine 253 to glycine 265 the composition is skewed to gly residues. Composition is skewed to low complexity over residues valine 339–lysine 354 and leucine 410–alanine 422. A compositionally biased stretch (basic and acidic residues) spans arginine 423–lysine 435. Low complexity-rich tracts occupy residues aspartate 437–proline 456, arginine 489–alanine 524, and alanine 537–threonine 573. A compositionally biased stretch (pro residues) spans proline 604 to alanine 617. Low complexity predominate over residues proline 634 to alanine 661. Residues glycine 696–glycine 709 show a composition bias toward gly residues. Residues proline 717–glutamate 735 are compositionally biased toward low complexity. Residues alanine 761–valine 771 are compositionally biased toward pro residues. Residues proline 785–leucine 806 are compositionally biased toward low complexity. Residues arginine 807–glycine 821 show a composition bias toward basic and acidic residues. Positions serine 832–proline 868 are enriched in low complexity. Positions alanine 884–proline 896 are enriched in pro residues. The Fibrillar collagen NC1 domain maps to threonine 978–leucine 1008.

The protein belongs to the fibrillar collagen family.

The protein resides in the secreted. Its subcellular location is the extracellular space. The protein localises to the extracellular matrix. The protein is Collagen, type I, alpha 1a of Epinephelus aeneus (White grouper).